Reading from the N-terminus, the 998-residue chain is Beta-galactosidase (998 aa).

The Proton donor role is filled by glutamate 431. Glutamate 508 functions as the Nucleophile in the catalytic mechanism.

The protein belongs to the glycosyl hydrolase 2 family.

The enzyme catalyses Hydrolysis of terminal non-reducing beta-D-galactose residues in beta-D-galactosides.. The chain is Beta-galactosidase (lacZ) from Lactococcus lactis subsp. lactis (strain IL1403) (Streptococcus lactis).